Consider the following 436-residue polypeptide: ATP-dependent protease ATPase subunit HslU (436 aa).

ATP is bound by residues Ile19, 61 to 66 (GVGKTE), Asp249, Glu314, and Arg386.

Belongs to the ClpX chaperone family. HslU subfamily. A double ring-shaped homohexamer of HslV is capped on each side by a ring-shaped HslU homohexamer. The assembly of the HslU/HslV complex is dependent on binding of ATP.

The protein resides in the cytoplasm. Functionally, ATPase subunit of a proteasome-like degradation complex; this subunit has chaperone activity. The binding of ATP and its subsequent hydrolysis by HslU are essential for unfolding of protein substrates subsequently hydrolyzed by HslV. HslU recognizes the N-terminal part of its protein substrates and unfolds these before they are guided to HslV for hydrolysis. The sequence is that of ATP-dependent protease ATPase subunit HslU from Bartonella bacilliformis (strain ATCC 35685 / KC583 / Herrer 020/F12,63).